The primary structure comprises 513 residues: Cytochrome P450 monooxygenase ARMGADRAFT_1018418 (513 aa).

Residues 1–21 (MTHASSAWFLAAVVIVTFIVV) form a helical membrane-spanning segment. Cys435 contributes to the heme binding site. An N-linked (GlcNAc...) asparagine glycan is attached at Asn442.

This sequence belongs to the cytochrome P450 family. Heme serves as cofactor.

Its subcellular location is the membrane. It participates in secondary metabolite biosynthesis. Its function is as follows. Cytochrome P450 monooxygenase, part of the gene cluster that mediates the biosynthesis of melleolides, a range of antifungal and phytotoxic polyketide derivatives composed of an orsellinic acid (OA) moiety esterified to various sesquiterpene alcohols. The first step in melleolides biosynthesis is performed by the delta(6)-protoilludene synthase PRO1 which catalyzes the cyclization of farnesyl diphosphate to protoilludene. The orsellinic acid synthase armB produces OA by condensing acetyl-CoA with 3 malonyl-CoA units in a three-round chain elongation reaction folowed by a C2-C7 ring closure. ArmB further catalyzes the trans-esterification of OA to the various sesquiterpene alcohols resulting from the hydroxylation of protoilludene. The melleolides cluster also includes 5 cytochrome P450 monooxygenases, 4 NAD(+)-dependent oxidoreductases, one flavin-dependent oxidoreductase, and one O-methyltransferase. The cytochrome P450 monooxygenases may be involved in protoilludene hydroxylation to elaborate melleolides with multiple alcohol groups, such as melleolide D, which carries alcohol functionalities at C-4, C-5, C-10, and C-13. The role of the NAD(+)-dependent enzymes remains unknown. Numerous melleolides, including arnamial, show 5'-O-methylation of the aromatic moiety which may be catalyzed by the methyltransferase encoded in the cluster. The flavin-dependent oxidoreductase might represent the dehydrogenase yielding the aldehyde in position 1 of arnamial and other melleolides. Finally, several halogenase localized outside of the cluster, are able to catalyze the transfer of a single chlorine atom to the melleolide backbone, resulting in a 6'-chloromelleolide product. The sequence is that of Cytochrome P450 monooxygenase ARMGADRAFT_1018418 from Armillaria gallica (Bulbous honey fungus).